A 560-amino-acid polypeptide reads, in one-letter code: Arginine--tRNA ligase (560 aa).

The short motif at 122-132 (ANPNGPLHIGH) is the 'HIGH' region element.

Belongs to the class-I aminoacyl-tRNA synthetase family.

It localises to the cytoplasm. The enzyme catalyses tRNA(Arg) + L-arginine + ATP = L-arginyl-tRNA(Arg) + AMP + diphosphate. The sequence is that of Arginine--tRNA ligase (argS) from Methanothermobacter thermautotrophicus (strain ATCC 29096 / DSM 1053 / JCM 10044 / NBRC 100330 / Delta H) (Methanobacterium thermoautotrophicum).